The chain runs to 670 residues: Sodium, potassium, lithium and rubidium/H(+) antiporter (670 aa).

The next 11 helical transmembrane spans lie at 5 to 27, 46 to 66, 83 to 103, 105 to 125, 156 to 176, 182 to 202, 228 to 248, 276 to 296, 314 to 334, 355 to 375, and 389 to 409; these read LVVL…IPFI, GLHF…PLLF, PILL…GYTI, WMIP…LSPT, ASGL…AFSL, SFVF…FLII, FVIY…VVAG, IILF…IPDV, YILV…LFFW, LLIS…FSIP, and LILF…TVVL.

It belongs to the monovalent cation:proton antiporter 1 (CPA1) transporter (TC 2.A.36) family. Nhak (TC 2.A.36.3.2) subfamily.

Its subcellular location is the cell membrane. Its function is as follows. Transporter involved in the efflux of sodium, potassium, lithium and rubidium. The protein is Sodium, potassium, lithium and rubidium/H(+) antiporter (nhaK) of Bacillus subtilis (strain 168).